The chain runs to 228 residues: L-ribulose-5-phosphate 4-epimerase UlaF (228 aa).

Substrate contacts are provided by residues Gly-26–Asn-27, Ser-43–Gly-44, and Ser-72–Ser-73. Positions 74, 93, and 95 each coordinate Zn(2+). Residue Asp-118 is the Proton donor/acceptor of the active site. Residue His-167 participates in Zn(2+) binding. Catalysis depends on Tyr-225, which acts as the Proton donor/acceptor.

Belongs to the aldolase class II family. AraD/FucA subfamily. Zn(2+) is required as a cofactor.

The enzyme catalyses L-ribulose 5-phosphate = D-xylulose 5-phosphate. It functions in the pathway cofactor degradation; L-ascorbate degradation; D-xylulose 5-phosphate from L-ascorbate: step 4/4. Catalyzes the isomerization of L-ribulose 5-phosphate to D-xylulose 5-phosphate. Is involved in the anaerobic L-ascorbate utilization. In Escherichia coli O81 (strain ED1a), this protein is L-ribulose-5-phosphate 4-epimerase UlaF.